The primary structure comprises 158 residues: Ribosome maturation factor RimP (158 aa).

Belongs to the RimP family.

The protein resides in the cytoplasm. Required for maturation of 30S ribosomal subunits. This chain is Ribosome maturation factor RimP, found in Pediococcus pentosaceus (strain ATCC 25745 / CCUG 21536 / LMG 10740 / 183-1w).